The chain runs to 465 residues: Cysteine--tRNA ligase (465 aa).

A Zn(2+)-binding site is contributed by Cys30. The 'HIGH' region signature appears at 32–42 (ITVYDYCHVGH). Zn(2+) is bound by residues Cys214, His239, and Glu243. Residues 271 to 275 (KMSKS) carry the 'KMSKS' region motif. Lys274 contributes to the ATP binding site.

The protein belongs to the class-I aminoacyl-tRNA synthetase family. In terms of assembly, monomer. The cofactor is Zn(2+).

The protein localises to the cytoplasm. The catalysed reaction is tRNA(Cys) + L-cysteine + ATP = L-cysteinyl-tRNA(Cys) + AMP + diphosphate. In Burkholderia cenocepacia (strain ATCC BAA-245 / DSM 16553 / LMG 16656 / NCTC 13227 / J2315 / CF5610) (Burkholderia cepacia (strain J2315)), this protein is Cysteine--tRNA ligase.